A 264-amino-acid polypeptide reads, in one-letter code: Apolipoprotein A-I (264 aa).

The first 18 residues, 1–18 (MKTVVLAVAVLFLTGSQA), serve as a signal peptide directing secretion. 2 consecutive repeat copies span residues 67-88 (LNLL…EQLG) and 89-110 (PVTQ…REMN). The 10 X approximate tandem repeats stretch occupies residues 67 to 264 (LNLLENWDTL…EEASKKLNAQ (198 aa)). M109 is subject to Methionine sulfoxide. One copy of the 3; half-length repeat lies at 111 to 121 (KDLEEVKAKVQ). 5 repeat units span residues 122 to 143 (PYLD…QKME), 144 to 165 (PLGA…EKLT), 166 to 187 (PLGE…TKMT), 188 to 207 (PYSD…LKDS), and 208 to 229 (PTLA…EKAK). M193 bears the Methionine sulfoxide mark. The 9; half-length repeat unit spans residues 230 to 240 (PALEDLRQGLM). Position 240 is a methionine sulfoxide (M240). Repeat unit 10 spans residues 241 to 264 (PVFESFKTRIMSMVEEASKKLNAQ).

This sequence belongs to the apolipoprotein A1/A4/E family. In terms of assembly, homodimer. Interacts with APOA1BP and CLU. Component of a sperm activating protein complex (SPAP), consisting of APOA1, an immunoglobulin heavy chain, an immunoglobulin light chain and albumin. Interacts with NDRG1. Interacts with SCGB3A2. Interacts with NAXE and YJEFN3. Glycosylated. Post-translationally, palmitoylated. In terms of processing, phosphorylation sites are present in the extracellular medium. Major protein of plasma HDL, also found in chylomicrons.

The protein resides in the secreted. In terms of biological role, participates in the reverse transport of cholesterol from tissues to the liver for excretion by promoting cholesterol efflux from tissues and by acting as a cofactor for the lecithin cholesterol acyltransferase (LCAT). As part of the SPAP complex, activates spermatozoa motility. The chain is Apolipoprotein A-I (APOAI) from Mesocricetus auratus (Golden hamster).